The chain runs to 207 residues: Superoxide dismutase [Mn] (207 aa).

Positions 28, 76, 160, and 164 each coordinate Mn(2+).

Belongs to the iron/manganese superoxide dismutase family. Requires Mn(2+) as cofactor.

It catalyses the reaction 2 superoxide + 2 H(+) = H2O2 + O2. Its function is as follows. Destroys superoxide anion radicals which are normally produced within the cells and which are toxic to biological systems. This is Superoxide dismutase [Mn] (sodA) from Mycobacterium intracellulare (strain ATCC 13950 / DSM 43223 / JCM 6384 / NCTC 13025 / 3600).